The chain runs to 646 residues: DNA mismatch repair protein MutL (646 aa).

2 disordered regions span residues 356–380 and 415–452; these read FENRTASNPPAEKPDEETDRVNENS and TKNSEGLFDSEATSNEAASAEIESSEDDVRETEHAKPH. A compositionally biased stretch (low complexity) spans 424-436; that stretch reads SEATSNEAASAEI.

This sequence belongs to the DNA mismatch repair MutL/HexB family.

This protein is involved in the repair of mismatches in DNA. It is required for dam-dependent methyl-directed DNA mismatch repair. May act as a 'molecular matchmaker', a protein that promotes the formation of a stable complex between two or more DNA-binding proteins in an ATP-dependent manner without itself being part of a final effector complex. The chain is DNA mismatch repair protein MutL from Staphylococcus carnosus (strain TM300).